A 269-amino-acid chain; its full sequence is Alcohol dehydrogenase-related 31 kDa protein (269 aa).

11–34 (YVADCGGIALETCKVLMTKNIAKL) provides a ligand contact to NAD(+). Substrate is bound at residue serine 139. The active-site Proton acceptor is tyrosine 152.

The protein belongs to the short-chain dehydrogenases/reductases (SDR) family.

This is Alcohol dehydrogenase-related 31 kDa protein (Adhr) from Drosophila lebanonensis (Fruit fly).